The following is a 194-amino-acid chain: MQFVPIKDAPGYLVNEAGDVFSTFTNKVLSRYIVDGYPAVKLQINGKQTSVLIHRIISHVFGDLYNLFDPELEVDHKDRDRLNLSKDNLQVLSKIEHQRKTNKDNGWSDSRVPCPLCGSLMLQRSVTCTNCKPKPTGRLIKPELSLDDITEKVLLMGWVKAAKELEVSESTLRRRYTKLTGLSPKVLTEQRKSK.

Its function is as follows. Endonuclease that cleaves only one strand of asymmetric DNA substrates thereby introducing interruptions into the template or coding strand. The protein is H-N-H endonuclease F-TflI of Escherichia coli (Enterobacteria phage T5).